Reading from the N-terminus, the 277-residue chain is Thymidylate synthase (277 aa).

Residues Arg27 and 132–133 (RR) contribute to the dUMP site. The Nucleophile role is filled by Cys152. DUMP is bound by residues 179–182 (RSAD), Asn190, and 220–222 (HVY). Asp182 contacts (6R)-5,10-methylene-5,6,7,8-tetrahydrofolate. Ala276 is a binding site for (6R)-5,10-methylene-5,6,7,8-tetrahydrofolate.

The protein belongs to the thymidylate synthase family. Bacterial-type ThyA subfamily. In terms of assembly, homodimer.

It is found in the cytoplasm. The enzyme catalyses dUMP + (6R)-5,10-methylene-5,6,7,8-tetrahydrofolate = 7,8-dihydrofolate + dTMP. It participates in pyrimidine metabolism; dTTP biosynthesis. In terms of biological role, catalyzes the reductive methylation of 2'-deoxyuridine-5'-monophosphate (dUMP) to 2'-deoxythymidine-5'-monophosphate (dTMP) while utilizing 5,10-methylenetetrahydrofolate (mTHF) as the methyl donor and reductant in the reaction, yielding dihydrofolate (DHF) as a by-product. This enzymatic reaction provides an intracellular de novo source of dTMP, an essential precursor for DNA biosynthesis. This chain is Thymidylate synthase, found in Albidiferax ferrireducens (strain ATCC BAA-621 / DSM 15236 / T118) (Rhodoferax ferrireducens).